We begin with the raw amino-acid sequence, 323 residues long: Galactosylgalactosylxylosylprotein 3-beta-glucuronosyltransferase 2 (323 aa).

Residues 1–2 (MK) are Cytoplasmic-facing. The chain crosses the membrane as a helical; Signal-anchor for type II membrane protein span at residues 3–23 (SALFTRFFILLPWILIVIIML). The Lumenal segment spans residues 24–323 (DVDTRRPVPP…YHLDTVKIEV (300 aa)). The tract at residues 51–80 (RLPLRRGGPAHGTQKRNQSRPQPQPEPQLP) is disordered. Asn-67 carries an N-linked (GlcNAc...) asparagine glycan. UDP-alpha-D-glucuronate contacts are provided by residues 87-89 (PTY), Asp-118, Arg-155, Arg-160, and 185-187 (DDD). Asp-187 contacts Mn(2+). An interaction with galactose moiety of substrate glycoprotein region spans residues 234–243 (WRADRPFAID). The active-site Proton donor/acceptor is the Glu-273. Residue Asn-292 is glycosylated (N-linked (GlcNAc...) asparagine). 300–302 (HTR) lines the UDP-alpha-D-glucuronate pocket.

Belongs to the glycosyltransferase 43 family. Homodimer. Mn(2+) is required as a cofactor. Expressed in the trachea, retina, spinal cord, hippocampus and other brain regions, and, at lower levels, in testis and ovary.

It is found in the golgi apparatus membrane. It catalyses the reaction 3-O-(beta-D-galactosyl-(1-&gt;3)-beta-D-galactosyl-(1-&gt;4)-beta-D-xylosyl)-L-seryl-[protein] + UDP-alpha-D-glucuronate = 3-O-(beta-D-GlcA-(1-&gt;3)-beta-D-Gal-(1-&gt;3)-beta-D-Gal-(1-&gt;4)-beta-D-Xyl)-L-seryl-[protein] + UDP + H(+). It functions in the pathway protein modification; protein glycosylation. Its function is as follows. Involved in the biosynthesis of L2/HNK-1 carbohydrate epitope on both glycolipids and glycoproteins. The sequence is that of Galactosylgalactosylxylosylprotein 3-beta-glucuronosyltransferase 2 (B3GAT2) from Homo sapiens (Human).